Here is a 326-residue protein sequence, read N- to C-terminus: Tetraacyldisaccharide 4'-kinase (326 aa).

55–62 (TVGGNGKT) serves as a coordination point for ATP.

The protein belongs to the LpxK family.

It carries out the reaction a lipid A disaccharide + ATP = a lipid IVA + ADP + H(+). It participates in glycolipid biosynthesis; lipid IV(A) biosynthesis; lipid IV(A) from (3R)-3-hydroxytetradecanoyl-[acyl-carrier-protein] and UDP-N-acetyl-alpha-D-glucosamine: step 6/6. Its function is as follows. Transfers the gamma-phosphate of ATP to the 4'-position of a tetraacyldisaccharide 1-phosphate intermediate (termed DS-1-P) to form tetraacyldisaccharide 1,4'-bis-phosphate (lipid IVA). The polypeptide is Tetraacyldisaccharide 4'-kinase (Tolumonas auensis (strain DSM 9187 / NBRC 110442 / TA 4)).